Here is an 80-residue protein sequence, read N- to C-terminus: Large ribosomal subunit protein bL31B (80 aa).

It belongs to the bacterial ribosomal protein bL31 family. Type B subfamily. Part of the 50S ribosomal subunit.

In Streptococcus sanguinis (strain SK36), this protein is Large ribosomal subunit protein bL31B.